Here is an 856-residue protein sequence, read N- to C-terminus: Valine--tRNA ligase (856 aa).

The short motif at 47–57 is the 'HIGH' region element; sequence PTASGVLHIGH. Residues 578–582 carry the 'KMSKS' region motif; it reads KMSKS. Lys581 is an ATP binding site.

The protein belongs to the class-I aminoacyl-tRNA synthetase family. ValS type 2 subfamily. As to quaternary structure, monomer.

The protein resides in the cytoplasm. It catalyses the reaction tRNA(Val) + L-valine + ATP = L-valyl-tRNA(Val) + AMP + diphosphate. In terms of biological role, catalyzes the attachment of valine to tRNA(Val). As ValRS can inadvertently accommodate and process structurally similar amino acids such as threonine, to avoid such errors, it has a 'posttransfer' editing activity that hydrolyzes mischarged Thr-tRNA(Val) in a tRNA-dependent manner. The sequence is that of Valine--tRNA ligase from Tropheryma whipplei (strain TW08/27) (Whipple's bacillus).